Here is a 292-residue protein sequence, read N- to C-terminus: High-affinity heme uptake system protein IsdE (292 aa).

The first 19 residues, 1–19, serve as a signal peptide directing secretion; it reads MRIIKYLTILVISVVILTS. Residue cysteine 20 is the site of N-palmitoyl cysteine attachment. Cysteine 20 is lipidated: S-diacylglycerol cysteine. A Fe/B12 periplasmic-binding domain is found at 35-291; that stretch reads RIVPTTVALT…QLYDLFYKDK (257 aa). The heme site is built by valine 41, alanine 42, serine 60, tyrosine 61, methionine 78, and histidine 229.

Belongs to the bacterial solute-binding protein 8 family. It depends on heme b as a cofactor.

It localises to the cell membrane. Functionally, involved in heme (porphyrin) scavenging. Binds Fe(2+) and Fe(3+) heme but the largest fraction is Fe(2+) heme. Functions as a high-affinity heme binding protein and probably has a role in relaying heme-iron from cell wall-anchored isd proteins receptors to the probable permease IsdF. The polypeptide is High-affinity heme uptake system protein IsdE (isdE) (Staphylococcus aureus (strain Mu3 / ATCC 700698)).